The following is a 325-amino-acid chain: Adenine deaminase (325 aa).

Residues H11, H13, and H189 each contribute to the Zn(2+) site. The active-site Proton donor is E192. Residue D270 participates in Zn(2+) binding. Residue D271 participates in substrate binding.

The protein belongs to the metallo-dependent hydrolases superfamily. Adenosine and AMP deaminases family. Adenine deaminase type 2 subfamily. Zn(2+) is required as a cofactor.

The enzyme catalyses adenine + H2O + H(+) = hypoxanthine + NH4(+). In terms of biological role, catalyzes the hydrolytic deamination of adenine to hypoxanthine. Plays an important role in the purine salvage pathway and in nitrogen catabolism. The protein is Adenine deaminase of Agrobacterium fabrum (strain C58 / ATCC 33970) (Agrobacterium tumefaciens (strain C58)).